The sequence spans 140 residues: UPF0306 protein YhbP (140 aa).

Belongs to the UPF0306 family.

This is UPF0306 protein YhbP from Escherichia coli O6:H1 (strain CFT073 / ATCC 700928 / UPEC).